The following is a 124-amino-acid chain: Kinocilin (124 aa).

Helical transmembrane passes span Leu13–Val33 and Val40–Leu60. A disordered region spans residues Pro80 to Gly124. Residues Arg90–Arg109 show a composition bias toward polar residues. The segment covering Thr110–Gly124 has biased composition (basic and acidic residues).

In terms of tissue distribution, preferentially expressed in the inner ear and testis. Localizes mainly in the kinocilium of sensory cells in the inner ear. Also present in the manchette of the spermatids, a transient structure enriched in interconnected microtubules (at protein level).

The protein localises to the membrane. Functionally, may play a role in stabilizing dense microtubular networks or in vesicular trafficking. This chain is Kinocilin (Kncn), found in Mus musculus (Mouse).